The following is a 399-amino-acid chain: 4-hydroxyphenylpyruvate dioxygenase (399 aa).

2 VOC domains span residues 23-166 (GYDH…LIER) and 197-355 (RIDH…LFTK). Fe cation is bound by residues His-200, His-283, and Glu-366.

Belongs to the 4HPPD family. Fe cation is required as a cofactor.

The enzyme catalyses 3-(4-hydroxyphenyl)pyruvate + O2 = homogentisate + CO2. It participates in amino-acid degradation; L-phenylalanine degradation; acetoacetate and fumarate from L-phenylalanine: step 3/6. The sequence is that of 4-hydroxyphenylpyruvate dioxygenase (TCRP) from Coccidioides posadasii (strain C735) (Valley fever fungus).